Consider the following 500-residue polypeptide: Trehalose-6-phosphate synthase (500 aa).

A D-glucose 6-phosphate-binding site is contributed by arginine 28. 48–49 serves as a coordination point for UDP-alpha-D-glucose; that stretch reads GG. Positions 104 and 158 each coordinate D-glucose 6-phosphate. UDP-alpha-D-glucose-binding residues include arginine 300 and lysine 305. Residue arginine 338 coordinates D-glucose 6-phosphate. Position 403–407 (403–407) interacts with UDP-alpha-D-glucose; that stretch reads LVAKE.

Belongs to the glycosyltransferase 20 family. As to quaternary structure, homotetramer.

The enzyme catalyses ADP-alpha-D-glucose + D-glucose 6-phosphate = alpha,alpha-trehalose 6-phosphate + ADP + H(+). It carries out the reaction CDP-alpha-D-glucose + D-glucose 6-phosphate = alpha,alpha-trehalose 6-phosphate + CDP + H(+). It catalyses the reaction GDP-alpha-D-glucose + D-glucose 6-phosphate = alpha,alpha-trehalose 6-phosphate + GDP + H(+). The catalysed reaction is TDP-alpha-D-glucose + D-glucose 6-phosphate = 5-methyl-UDP + alpha,alpha-trehalose 6-phosphate + H(+). The enzyme catalyses D-glucose 6-phosphate + UDP-alpha-D-glucose = alpha,alpha-trehalose 6-phosphate + UDP + H(+). It functions in the pathway glycan biosynthesis; trehalose biosynthesis. In terms of biological role, probably involved in the osmoprotection via the biosynthesis of trehalose and in the production of glycogen and alpha-glucan via the TreS-Pep2 branch involved in the biosynthesis of maltose-1-phosphate (M1P). Catalyzes the transfer of glucose from UDP-glucose (UDP-Glc) to D-glucose 6-phosphate (Glc-6-P) to form trehalose-6-phosphate. Probably also able to use ADP-Glc, CDP-Glc, GDP-Glc and TDP-Glc as glucosyl donors. The polypeptide is Trehalose-6-phosphate synthase (Mycobacterium ulcerans (strain Agy99)).